The following is an 87-amino-acid chain: MSYYSGYSGGLGYGYGSSFGGPGCGCNSIRRLGCGSGYGGFGYGSGYGGYGYGSDYGGYGYGSSYGGYGCGCRRPSCCGRYGFSNFY.

The interval 6–72 is 21 X 2 AA repeats of G-[YCGS]; it reads GYSGGLGYGY…SSYGGYGCGC (67 aa).

This sequence belongs to the KRTAP type 19 family. In terms of assembly, interacts with hair keratins. In terms of tissue distribution, strong expression in narrowly defined pattern restricted to the lower and middle cortical regions of the hair shaft in both developing and cycling hair. During hair follicle regression (catagen), expression levels decrease until expression is no longer detectable in follicles at resting stage (telogen).

Functionally, in the hair cortex, hair keratin intermediate filaments are embedded in an interfilamentous matrix, consisting of hair keratin-associated proteins (KRTAP), which are essential for the formation of a rigid and resistant hair shaft through their extensive disulfide bond cross-linking with abundant cysteine residues of hair keratins. The matrix proteins include the high-sulfur and high-glycine-tyrosine keratins. The sequence is that of Keratin-associated protein 19-1 (Krtap19-1) from Mus musculus (Mouse).